A 327-amino-acid polypeptide reads, in one-letter code: Phenylalanine--tRNA ligase alpha subunit (327 aa).

E252 lines the Mg(2+) pocket.

Belongs to the class-II aminoacyl-tRNA synthetase family. Phe-tRNA synthetase alpha subunit type 1 subfamily. As to quaternary structure, tetramer of two alpha and two beta subunits. It depends on Mg(2+) as a cofactor.

Its subcellular location is the cytoplasm. It carries out the reaction tRNA(Phe) + L-phenylalanine + ATP = L-phenylalanyl-tRNA(Phe) + AMP + diphosphate + H(+). The polypeptide is Phenylalanine--tRNA ligase alpha subunit (Vibrio parahaemolyticus serotype O3:K6 (strain RIMD 2210633)).